The chain runs to 177 residues: Transcriptional repressor NrdR (177 aa).

A zinc finger lies at 3–34 (CLFCQHTDTRVIDSRVSEDGATIRRRRECEAC). Residues 49–139 (PVIIKKDGGR…VYRSFQDVAD (91 aa)) enclose the ATP-cone domain.

Belongs to the NrdR family. The cofactor is Zn(2+).

Functionally, negatively regulates transcription of bacterial ribonucleotide reductase nrd genes and operons by binding to NrdR-boxes. The chain is Transcriptional repressor NrdR from Xylella fastidiosa (strain M23).